We begin with the raw amino-acid sequence, 156 residues long: Small ribosomal subunit protein uS7 (156 aa).

This sequence belongs to the universal ribosomal protein uS7 family. In terms of assembly, part of the 30S ribosomal subunit. Contacts proteins S9 and S11.

One of the primary rRNA binding proteins, it binds directly to 16S rRNA where it nucleates assembly of the head domain of the 30S subunit. Is located at the subunit interface close to the decoding center, probably blocks exit of the E-site tRNA. In Azoarcus sp. (strain BH72), this protein is Small ribosomal subunit protein uS7.